Here is a 398-residue protein sequence, read N- to C-terminus: MVAGIHSLLLLQFYQILLSGCTGLVPEEGKRKYSESTRSSPQQSQQVLDQFELRLLNMFGLKRRPTPGKNVVIPPYMLDLYHLHSAQLADDQGSSEVDYHMERAASRANTVRSFHHEESMEEIPESGEKTIQRFFFNLSSIPDEELVTSSELRIFREQVQEPFKTDGSKLHRINIYDIVKPAAAASRGPVVRLLDTRLIHHNESKWESFDVTPAITRWIAHKQPNHGFVVEVTHLDNDTNVPKRHVRISRSLTLDKGHWPRIRPLLVTFSHDGKGHALHKRQKRQARHKQRKRLKSSCRRHPLYVDFSDVGWNDWIVAPPGYHAFYCHGECPFPLADHLNSTNHAIVQTLVNSVNTNIPKACCVPTELSAISMLYLDENEKVVLKNYQDMVVEGCGCR.

Positions M1–G23 are cleaved as a signal peptide. Residues L24–R284 constitute a propeptide that is removed on maturation. N-linked (GlcNAc...) asparagine glycosylation is found at N137, N202, N237, and N340. Disulfide bonds link C298-C363, C327-C395, and C331-C397.

The protein belongs to the TGF-beta family. As to quaternary structure, homodimer; disulfide-linked.

The protein resides in the secreted. Functionally, induces cartilage and bone formation. This is Bone morphogenetic protein 2-B (bmp2-b) from Xenopus laevis (African clawed frog).